The chain runs to 338 residues: 4'-phosphopantetheinyl transferase (338 aa).

The protein belongs to the P-Pant transferase superfamily.

It carries out the reaction apo-[ACP] + CoA = holo-[ACP] + adenosine 3',5'-bisphosphate + H(+). Acyl-carrier-protein synthase that transfers the 4'-phosphopantetheine moiety from coenzyme A to a Ser of an acyl-carrier-protein. The 4'-phosphopantetheine (4'-PPT) portion of CoA provides the essential prosthetic group for a number of carrier proteins and multi-domain enzymes, priming them for the acceptance of acyl building blocks in fatty acid synthesis and many aspects of secondary metabolism mediated by polyketide synthases (PKSs) and non-ribosomal peptide synthetases (NRPSs). Plays a key role in liamocins biosynthesis by activationg the HR-PKS PKS1 that produces 3,5-dihydroxydecanoic acid, a precursor of liamocins. This is 4'-phosphopantetheinyl transferase from Aureobasidium melanogenum (Aureobasidium pullulans var. melanogenum).